A 624-amino-acid polypeptide reads, in one-letter code: (-)-beta-phellandrene synthase 1, chloroplastic (624 aa).

The N-terminal 48 residues, 1 to 48, are a transit peptide targeting the chloroplast; it reads MAIVSSVPLASKSCLHKSLISSIHKLKPFCRTIPTLGMSRPGKYVMPS. Asp375, Asp379, and Asp527 together coordinate Mg(2+). Positions 375 to 379 match the DDXXD motif motif; sequence DDMYD.

The protein belongs to the terpene synthase family. Tpsd subfamily. Mg(2+) serves as cofactor. Requires Mn(2+) as cofactor.

The protein resides in the plastid. It is found in the chloroplast. It carries out the reaction (2E)-geranyl diphosphate = (-)-beta-phellandrene + diphosphate. The protein operates within terpene metabolism; oleoresin biosynthesis. In terms of biological role, terpene synthase (TPS) involved in the biosynthesis of monoterpene natural products included in conifer oleoresin secretions and volatile emissions; these compounds contribute to biotic and abiotic stress defense against herbivores and pathogens. Catalyzes the conversion of (2E)-geranyl diphosphate (GPP) to (-)-beta-phellandrene. This is (-)-beta-phellandrene synthase 1, chloroplastic from Picea sitchensis (Sitka spruce).